The sequence spans 267 residues: 3-methyl-2-oxobutanoate hydroxymethyltransferase (267 aa).

Residues Asp-45 and Asp-84 each contribute to the Mg(2+) site. Residues 45-46 (DS), Asp-84, and Lys-113 contribute to the 3-methyl-2-oxobutanoate site. Residue Glu-115 participates in Mg(2+) binding. Glu-182 functions as the Proton acceptor in the catalytic mechanism.

The protein belongs to the PanB family. Homodecamer; pentamer of dimers. Mg(2+) is required as a cofactor.

The protein localises to the cytoplasm. The catalysed reaction is 3-methyl-2-oxobutanoate + (6R)-5,10-methylene-5,6,7,8-tetrahydrofolate + H2O = 2-dehydropantoate + (6S)-5,6,7,8-tetrahydrofolate. The protein operates within cofactor biosynthesis; coenzyme A biosynthesis. Its function is as follows. Catalyzes the reversible reaction in which hydroxymethyl group from 5,10-methylenetetrahydrofolate is transferred onto alpha-ketoisovalerate to form ketopantoate. In Sulfurisphaera tokodaii (strain DSM 16993 / JCM 10545 / NBRC 100140 / 7) (Sulfolobus tokodaii), this protein is 3-methyl-2-oxobutanoate hydroxymethyltransferase.